Consider the following 239-residue polypeptide: Secreted effector CFEM9 (239 aa).

The N-terminal stretch at 1–18 (MRVLKFLSLMAMLGCTIG) is a signal peptide. In terms of domain architecture, CFEM spans 19-125 (QSGSATPGSL…DALRRREDEY (107 aa)). 4 disulfide bridges follow: cysteine 43/cysteine 82, cysteine 47/cysteine 77, cysteine 57/cysteine 63, and cysteine 65/cysteine 98. Residue aspartate 60 participates in heme binding. Over residues 187 to 199 (KSATTTEATRNTV) the composition is skewed to polar residues. A disordered region spans residues 187–216 (KSATTTEATRNTVPASTTAPSPSPQLYTGN). A lipid anchor (GPI-anchor amidated glycine) is attached at glycine 215. N-linked (GlcNAc...) asparagine glycosylation is present at asparagine 216. Positions 216 to 239 (NASTSRATVSLTVVLTVAAVYLVL) are cleaved as a propeptide — removed in mature form.

It belongs to the RBT5 family.

It is found in the cell membrane. It localises to the secreted. The protein resides in the host nucleus. Its subcellular location is the host cell membrane. In terms of biological role, appears to function during host infection, and may play a role in suppressing the host immune response. The polypeptide is Secreted effector CFEM9 (Marssonina brunnea f. sp. multigermtubi (strain MB_m1) (Marssonina leaf spot fungus)).